Consider the following 381-residue polypeptide: tRNA N6-adenosine threonylcarbamoyltransferase (381 aa).

Residues H114 and H118 each coordinate Fe cation. Residues 142-146, D178, G191, D195, and N321 contribute to the substrate site; that span reads VVSGG. D349 lines the Fe cation pocket.

The protein belongs to the KAE1 / TsaD family. Fe(2+) serves as cofactor.

It is found in the cytoplasm. It carries out the reaction L-threonylcarbamoyladenylate + adenosine(37) in tRNA = N(6)-L-threonylcarbamoyladenosine(37) in tRNA + AMP + H(+). Required for the formation of a threonylcarbamoyl group on adenosine at position 37 (t(6)A37) in tRNAs that read codons beginning with adenine. Is involved in the transfer of the threonylcarbamoyl moiety of threonylcarbamoyl-AMP (TC-AMP) to the N6 group of A37, together with TsaE and TsaB. TsaD likely plays a direct catalytic role in this reaction. The protein is tRNA N6-adenosine threonylcarbamoyltransferase of Koribacter versatilis (strain Ellin345).